The following is a 646-amino-acid chain: Alkyl/aryl-sulfatase BDS1 (646 aa).

Met1 is modified (N-acetylmethionine). Positions 162, 164, 166, 167, 273, 292, and 337 each coordinate Zn(2+).

Belongs to the metallo-beta-lactamase superfamily. Type III sulfatase family. The cofactor is Zn(2+).

Its function is as follows. Alkyl/aryl-sulfatase. Enables the use of SDS and 4-nitrocatechol as sulfur source. The protein is Alkyl/aryl-sulfatase BDS1 (BDS1) of Saccharomyces cerevisiae (strain ATCC 204508 / S288c) (Baker's yeast).